We begin with the raw amino-acid sequence, 170 residues long: Adenine phosphoribosyltransferase (170 aa).

This sequence belongs to the purine/pyrimidine phosphoribosyltransferase family. As to quaternary structure, homodimer.

Its subcellular location is the cytoplasm. It carries out the reaction AMP + diphosphate = 5-phospho-alpha-D-ribose 1-diphosphate + adenine. It participates in purine metabolism; AMP biosynthesis via salvage pathway; AMP from adenine: step 1/1. Functionally, catalyzes a salvage reaction resulting in the formation of AMP, that is energically less costly than de novo synthesis. The polypeptide is Adenine phosphoribosyltransferase (Bacillus subtilis (strain 168)).